The chain runs to 473 residues: ATP synthase subunit beta (473 aa).

An ATP-binding site is contributed by 158-165 (GGAGVGKT).

It belongs to the ATPase alpha/beta chains family. In terms of assembly, F-type ATPases have 2 components, CF(1) - the catalytic core - and CF(0) - the membrane proton channel. CF(1) has five subunits: alpha(3), beta(3), gamma(1), delta(1), epsilon(1). CF(0) has three main subunits: a(1), b(2) and c(9-12). The alpha and beta chains form an alternating ring which encloses part of the gamma chain. CF(1) is attached to CF(0) by a central stalk formed by the gamma and epsilon chains, while a peripheral stalk is formed by the delta and b chains.

It is found in the cell membrane. The enzyme catalyses ATP + H2O + 4 H(+)(in) = ADP + phosphate + 5 H(+)(out). Functionally, produces ATP from ADP in the presence of a proton gradient across the membrane. The catalytic sites are hosted primarily by the beta subunits. This is ATP synthase subunit beta from Bacillus velezensis (strain DSM 23117 / BGSC 10A6 / LMG 26770 / FZB42) (Bacillus amyloliquefaciens subsp. plantarum).